A 339-amino-acid chain; its full sequence is Dihydroorotate dehydrogenase (quinone) (339 aa).

Residues 62–66 and Thr86 each bind FMN; that span reads AGLDK. Lys66 provides a ligand contact to substrate. Substrate is bound at residue 111–115; sequence NRMGF. 2 residues coordinate FMN: Asn139 and Asn172. Asn172 serves as a coordination point for substrate. The active-site Nucleophile is the Ser175. Asn177 lines the substrate pocket. Residues Lys217 and Thr245 each contribute to the FMN site. 246–247 lines the substrate pocket; it reads NT. Residues Gly268, Gly297, and 318–319 contribute to the FMN site; that span reads YS.

It belongs to the dihydroorotate dehydrogenase family. Type 2 subfamily. Monomer. Requires FMN as cofactor.

It is found in the cell membrane. The catalysed reaction is (S)-dihydroorotate + a quinone = orotate + a quinol. It participates in pyrimidine metabolism; UMP biosynthesis via de novo pathway; orotate from (S)-dihydroorotate (quinone route): step 1/1. Its function is as follows. Catalyzes the conversion of dihydroorotate to orotate with quinone as electron acceptor. The polypeptide is Dihydroorotate dehydrogenase (quinone) (Shewanella denitrificans (strain OS217 / ATCC BAA-1090 / DSM 15013)).